Reading from the N-terminus, the 380-residue chain is Cytochrome b (380 aa).

The next 4 membrane-spanning stretches (helical) occupy residues 34 to 54 (FGSLLALCLMTQILTGLLLAM), 78 to 99 (WLIRNMHANGASFFFICIYLHI), 114 to 134 (WNTGVLLLLTLMATAFVGYVL), and 179 to 199 (FFALHFLLPFMIAGLTLIHLT). His84 and His98 together coordinate heme b. The heme b site is built by His183 and His197. Residue His202 participates in a ubiquinone binding. A run of 4 helical transmembrane segments spans residues 227–247 (LKDALGLALLLLPLTTMALFS), 289–309 (LGGVLALAASVLVLFLSPLLH), 321–341 (LSQLLFWTLVANLLILTWIGS), and 348–368 (FIIIGQLASTTYFIILLILFP).

Belongs to the cytochrome b family. In terms of assembly, the cytochrome bc1 complex contains 11 subunits: 3 respiratory subunits (MT-CYB, CYC1 and UQCRFS1), 2 core proteins (UQCRC1 and UQCRC2) and 6 low-molecular weight proteins (UQCRH/QCR6, UQCRB/QCR7, UQCRQ/QCR8, UQCR10/QCR9, UQCR11/QCR10 and a cleavage product of UQCRFS1). This cytochrome bc1 complex then forms a dimer. Heme b serves as cofactor.

Its subcellular location is the mitochondrion inner membrane. In terms of biological role, component of the ubiquinol-cytochrome c reductase complex (complex III or cytochrome b-c1 complex) that is part of the mitochondrial respiratory chain. The b-c1 complex mediates electron transfer from ubiquinol to cytochrome c. Contributes to the generation of a proton gradient across the mitochondrial membrane that is then used for ATP synthesis. This is Cytochrome b (MT-CYB) from Oceanodroma tethys (Wedge-rumped storm-petrel).